The chain runs to 630 residues: Golgi apyrase (630 aa).

Residues 1 to 500 (MLIENTNDRF…RKQSSSLSNK (500 aa)) are Lumenal-facing. Glu152 serves as the catalytic Proton acceptor. Residues 501-517 (GFLMWFAIICCIFYLIF) traverse the membrane as a helical segment. Residues 518–630 (HRSHIIRRRF…SKFKDSRLYD (113 aa)) are Cytoplasmic-facing. The segment at 586–606 (SSATMQREHEPQRTASQSANL) is disordered.

Belongs to the GDA1/CD39 NTPase family. In terms of assembly, interacts with activator subunit VMA13 of vacuolar H(+)-ATPase. Interacts with CDC55; this interaction is disrupted by adenovirus E4orf4, which remains associated with both YND1 and CDC55. Ca(2+) is required as a cofactor. The cofactor is Mg(2+). Requires Mn(2+) as cofactor.

The protein resides in the golgi apparatus. It is found in the membrane. It catalyses the reaction a ribonucleoside 5'-triphosphate + 2 H2O = a ribonucleoside 5'-phosphate + 2 phosphate + 2 H(+). The protein operates within protein modification; protein glycosylation. Activity is inhibited both by interaction with VMA13 and by V-ATPase acidification of the lumen. The activity of VMA13 is not required for YND1 inhibition. Catalyzes the hydrolysis of phosphoanhydride bonds of nucleoside tri- and di-phosphates. Has equal high activity toward ADP/ATP, GDP/GTP, and UDP/UTP and approximately 50% less toward CDP/CTP and thiamine pyrophosphate. Has no activity toward GMP. Required for Golgi glycosylation and cell wall integrity. Together with CDC55, required for adenovirus E4orf4 (early region 4 open reading frame 4) induced toxicity, the apyrase activity is not required for this function. Plays a role in sphingolipid synthesis. This Saccharomyces cerevisiae (strain ATCC 204508 / S288c) (Baker's yeast) protein is Golgi apyrase (YND1).